Here is a 474-residue protein sequence, read N- to C-terminus: Glutamate--tRNA ligase (474 aa).

Positions P9–G19 match the 'HIGH' region motif. The short motif at K240–R244 is the 'KMSKS' region element. K243 provides a ligand contact to ATP.

Belongs to the class-I aminoacyl-tRNA synthetase family. Glutamate--tRNA ligase type 1 subfamily. In terms of assembly, monomer.

Its subcellular location is the cytoplasm. It carries out the reaction tRNA(Glu) + L-glutamate + ATP = L-glutamyl-tRNA(Glu) + AMP + diphosphate. In terms of biological role, catalyzes the attachment of glutamate to tRNA(Glu) in a two-step reaction: glutamate is first activated by ATP to form Glu-AMP and then transferred to the acceptor end of tRNA(Glu). The polypeptide is Glutamate--tRNA ligase (Vibrio vulnificus (strain YJ016)).